The primary structure comprises 686 residues: tRNA wybutosine-synthesizing protein 4 (686 aa).

Residues 1 to 22 (MGPRSRQRRTGTVQSTNDSSSL) are disordered. Polar residues predominate over residues 10-22 (TGTVQSTNDSSSL). S-adenosyl-L-methionine is bound by residues Arg59, Gly89, Asp114, 161–162 (DL), and Glu188.

The protein belongs to the methyltransferase superfamily. LCMT family. In terms of assembly, interacts with RNF144B/IBRDC2.

The enzyme catalyses 7-[(3S)-3-amino-3-carboxypropyl]wyosine(37) in tRNA(Phe) + S-adenosyl-L-methionine = 7-[(3S)-(3-amino-3-methoxycarbonyl)propyl]wyosine(37) in tRNA(Phe) + S-adenosyl-L-homocysteine. The catalysed reaction is 7-[(3S)-(3-amino-3-methoxycarbonyl)propyl]wyosine(37) in tRNA(Phe) + S-adenosyl-L-methionine + CO2 = wybutosine(37) in tRNA(Phe) + S-adenosyl-L-homocysteine + 2 H(+). It participates in tRNA modification; wybutosine-tRNA(Phe) biosynthesis. Its function is as follows. Probable S-adenosyl-L-methionine-dependent methyltransferase that acts as a component of the wybutosine biosynthesis pathway. Wybutosine is a hyper modified guanosine with a tricyclic base found at the 3'-position adjacent to the anticodon of eukaryotic phenylalanine tRNA. May methylate the carboxyl group of leucine residues to form alpha-leucine ester residues. The protein is tRNA wybutosine-synthesizing protein 4 (Lcmt2) of Rattus norvegicus (Rat).